The chain runs to 376 residues: DNA-directed RNA polymerase subunit alpha (376 aa).

The tract at residues 1–259 (MSDNSQNLLY…KHFSIFEKMD (259 aa)) is alpha N-terminal domain (alpha-NTD). Residues 276–376 (KDDILHKLVL…EKIRSKNVKG (101 aa)) are alpha C-terminal domain (alpha-CTD).

This sequence belongs to the RNA polymerase alpha chain family. In terms of assembly, homodimer. The RNAP catalytic core consists of 2 alpha, 1 beta, 1 beta' and 1 omega subunit. When a sigma factor is associated with the core the holoenzyme is formed, which can initiate transcription.

It catalyses the reaction RNA(n) + a ribonucleoside 5'-triphosphate = RNA(n+1) + diphosphate. DNA-dependent RNA polymerase catalyzes the transcription of DNA into RNA using the four ribonucleoside triphosphates as substrates. The sequence is that of DNA-directed RNA polymerase subunit alpha from Chlamydia felis (strain Fe/C-56) (Chlamydophila felis).